Reading from the N-terminus, the 127-residue chain is Aspartate 1-decarboxylase (127 aa).

Ser-25 functions as the Schiff-base intermediate with substrate; via pyruvic acid in the catalytic mechanism. Ser-25 carries the pyruvic acid (Ser) modification. Thr-57 lines the substrate pocket. The active-site Proton donor is the Tyr-58. Residue 73-75 (GAA) coordinates substrate.

It belongs to the PanD family. As to quaternary structure, heterooctamer of four alpha and four beta subunits. It depends on pyruvate as a cofactor. Post-translationally, is synthesized initially as an inactive proenzyme, which is activated by self-cleavage at a specific serine bond to produce a beta-subunit with a hydroxyl group at its C-terminus and an alpha-subunit with a pyruvoyl group at its N-terminus.

The protein localises to the cytoplasm. It carries out the reaction L-aspartate + H(+) = beta-alanine + CO2. It participates in cofactor biosynthesis; (R)-pantothenate biosynthesis; beta-alanine from L-aspartate: step 1/1. Catalyzes the pyruvoyl-dependent decarboxylation of aspartate to produce beta-alanine. The chain is Aspartate 1-decarboxylase from Bacillus velezensis (strain DSM 23117 / BGSC 10A6 / LMG 26770 / FZB42) (Bacillus amyloliquefaciens subsp. plantarum).